Reading from the N-terminus, the 487-residue chain is 2-succinylbenzoate--CoA ligase (487 aa).

This sequence belongs to the ATP-dependent AMP-binding enzyme family. MenE subfamily.

It carries out the reaction 2-succinylbenzoate + ATP + CoA = 2-succinylbenzoyl-CoA + AMP + diphosphate. It functions in the pathway quinol/quinone metabolism; 1,4-dihydroxy-2-naphthoate biosynthesis; 1,4-dihydroxy-2-naphthoate from chorismate: step 5/7. It participates in quinol/quinone metabolism; menaquinone biosynthesis. Functionally, converts 2-succinylbenzoate (OSB) to 2-succinylbenzoyl-CoA (OSB-CoA). The polypeptide is 2-succinylbenzoate--CoA ligase (Bacillus velezensis (strain DSM 23117 / BGSC 10A6 / LMG 26770 / FZB42) (Bacillus amyloliquefaciens subsp. plantarum)).